Here is a 571-residue protein sequence, read N- to C-terminus: Putative phospholipase B-like 1 (571 aa).

The first 18 residues, 1-18 (MNWIFIFLAAAVAIGCEA), serve as a signal peptide directing secretion. N-linked (GlcNAc...) asparagine glycans are attached at residues Asn-62, Asn-149, Asn-442, and Asn-473.

The protein belongs to the phospholipase B-like family.

The protein resides in the lysosome. Functionally, putative phospholipase. The polypeptide is Putative phospholipase B-like 1 (Caenorhabditis elegans).